We begin with the raw amino-acid sequence, 424 residues long: Type II methyltransferase M.BspRI (424 aa).

The SAM-dependent MTase C5-type domain maps to 58-408; that stretch reads FNVLSLFCGA…KSIAQFAADY (351 aa). Cysteine 156 functions as the S-methylcysteine intermediate in the catalytic mechanism. Cysteine 181 carries the post-translational modification S-methylcysteine; by autocatalysis.

It belongs to the class I-like SAM-binding methyltransferase superfamily. C5-methyltransferase family. Monomer. In terms of processing, in the absence of DNA, can self-methylate two cysteine residues.

The enzyme catalyses a 2'-deoxycytidine in DNA + S-adenosyl-L-methionine = a 5-methyl-2'-deoxycytidine in DNA + S-adenosyl-L-homocysteine + H(+). A methylase, recognizes the double-stranded sequence 5'-GGCC-3', methylates C-3 on both strands, and protects the DNA from cleavage by the BspRI endonuclease. The protein is Type II methyltransferase M.BspRI (bspRIM) of Lysinibacillus sphaericus (Bacillus sphaericus).